A 147-amino-acid chain; its full sequence is Protein SprT-like (147 aa).

Positions 5–142 (DYVNEVSLED…SFCRGHLKEI (138 aa)) constitute a SprT-like domain. Residue His64 participates in Zn(2+) binding. Glu65 is an active-site residue. His68 is a Zn(2+) binding site.

This sequence belongs to the SprT family. Zn(2+) is required as a cofactor.

The protein localises to the cytoplasm. The chain is Protein SprT-like from Streptococcus uberis (strain ATCC BAA-854 / 0140J).